We begin with the raw amino-acid sequence, 126 residues long: Cystatin-C (126 aa).

An N-terminal signal peptide occupies residues M1–G18. One can recognise a Cystatin domain in the interval G22–W115. Residues Q64–G68 carry the Secondary area of contact motif. Intrachain disulfides connect C82–C92 and C106–C126.

Belongs to the cystatin family. Ubiquitously expressed in normal tissues including brain, eye, gill, heart, gullet, liver, spleen, stomach, pyloric ceca, intestine, kidney and muscle. Expressed, but not up-regulated, in lipopolysaccharide (LPS)-stimulated tissues including kidney, spleen, muscle and gill.

Its subcellular location is the secreted. In terms of biological role, thiol protease inhibitor. Has high papain inhibitory activity and inhibits to a lesser extent fish cathepsins L, S, K, F, X and bovine cathepsin B in vitro. The chain is Cystatin-C from Paralichthys olivaceus (Bastard halibut).